The sequence spans 576 residues: Chaperonin CPN60-2, mitochondrial (576 aa).

Residues 1–34 (MYRAAASLASKARQAGSSSAARQVGSRLAWSRNY) constitute a mitochondrion transit peptide.

It belongs to the chaperonin (HSP60) family.

Its subcellular location is the mitochondrion. In terms of biological role, implicated in mitochondrial protein import and macromolecular assembly. May facilitate the correct folding of imported proteins. May also prevent misfolding and promote the refolding and proper assembly of unfolded polypeptides generated under stress conditions in the mitochondrial matrix. The sequence is that of Chaperonin CPN60-2, mitochondrial (CPN60II) from Zea mays (Maize).